A 151-amino-acid chain; its full sequence is Caveolin-3 (151 aa).

Topologically, residues 1-83 (MMTEEHTDLE…RLLSTLLGVP (83 aa)) are cytoplasmic. A Glycyl lysine isopeptide (Lys-Gly) (interchain with G-Cter in SUMO3) cross-link involves residue Lys38. The segment at residues 84–104 (LALLWGFLFACISFCHIWAVV) is an intramembrane region (helical). At 105-151 (PCIKSYLIEIQCISHIYSLCIRTFCNPLFAALGQVCSNIKVVLRREG) the chain is on the cytoplasmic side.

This sequence belongs to the caveolin family. Homooligomer. Interacts with DYSF. Interacts with DLG1 and KCNA5; forms a ternary complex. Interacts with DAG1 (via its C-terminal); the interaction prevents binding of DAG1 with DMD. Interacts with TRIM72. Interacts with MUSK; may regulate MUSK signaling. Interacts with POPDC1. Interacts with CAVIN1, CAVIN2 and CAVIN4. Post-translationally, sumoylation with SUMO3 by PIAS4 may reduce agonist-induced internalization and desensitization of adrenergic receptor ABRD2. Expressed predominantly in muscle.

The protein localises to the golgi apparatus membrane. It is found in the cell membrane. Its subcellular location is the membrane. The protein resides in the caveola. It localises to the sarcolemma. Functionally, may act as a scaffolding protein within caveolar membranes. Interacts directly with G-protein alpha subunits and can functionally regulate their activity. May also regulate voltage-gated potassium channels. Plays a role in the sarcolemma repair mechanism of both skeletal muscle and cardiomyocytes that permits rapid resealing of membranes disrupted by mechanical stress. Mediates the recruitment of CAVIN2 and CAVIN3 proteins to the caveolae. The sequence is that of Caveolin-3 (Cav3) from Rattus norvegicus (Rat).